Reading from the N-terminus, the 274-residue chain is MAIHLYKTSTPSTRNGAVASQVKSNPRNNLIYGQHHCGKGRNARGIITARHRGGGHKRLYRKIDFRRNAKDIYGRIVTIEYDPNRNAYICLIHYGDGEKRYILHPRGAIIGDTIVSGTEVPIKMGNALPLTDMPLGTAIHNIEITLGKGGQLARAAGAVAKLIAKEGKSATLKLPSGEVRLISKNCSATVGQVGNVGVNQKSLGRAGSKCWLGKRPVVRGVVMNPVDHPHGGGEGRAPIGRKKPVTPWGYPALGRRTRKRKKYSETLILRRRSK.

A disordered region spans residues 225-274; that stretch reads PVDHPHGGGEGRAPIGRKKPVTPWGYPALGRRTRKRKKYSETLILRRRSK.

It belongs to the universal ribosomal protein uL2 family. As to quaternary structure, part of the 50S ribosomal subunit.

It localises to the plastid. The protein resides in the chloroplast. This chain is Large ribosomal subunit protein uL2cz/uL2cy (rpl2-A), found in Crucihimalaya wallichii (Rock-cress).